A 150-amino-acid chain; its full sequence is Small ribosomal subunit protein uS7cz/uS7cy (150 aa).

The protein belongs to the universal ribosomal protein uS7 family. Part of the 30S ribosomal subunit.

It is found in the plastid. The protein resides in the chloroplast. One of the primary rRNA binding proteins, it binds directly to 16S rRNA where it nucleates assembly of the head domain of the 30S subunit. This is Small ribosomal subunit protein uS7cz/uS7cy (rps7-A) from Adiantum capillus-veneris (Maidenhair fern).